Reading from the N-terminus, the 545-residue chain is Threonine--tRNA ligase catalytic subunit (545 aa).

The interval 139-433 (DHRLIGEKLD…LLEHFKGKLP (295 aa)) is catalytic. Zn(2+) is bound by residues Cys231, His282, and His410.

It belongs to the class-II aminoacyl-tRNA synthetase family. Homodimer. Probably interacts with its editing subunit. The cofactor is Zn(2+).

It localises to the cytoplasm. The enzyme catalyses tRNA(Thr) + L-threonine + ATP = L-threonyl-tRNA(Thr) + AMP + diphosphate + H(+). Its function is as follows. Catalyzes the attachment of threonine to tRNA(Thr) in a two-step reaction: L-threonine is first activated by ATP to form Thr-AMP and then transferred to the acceptor end of tRNA(Thr). Also activates L-serine and transfers it to tRNA(Thr) but cannot deacylate incorrectly charged amino acid; unlike most archaea the editing function is found in a freestanding protein. The sequence is that of Threonine--tRNA ligase catalytic subunit from Saccharolobus islandicus (strain L.S.2.15 / Lassen #1) (Sulfolobus islandicus).